We begin with the raw amino-acid sequence, 634 residues long: MINIRFPDGSIREFEAGVNSLDVAKSISPSLAKATVAAYIDDQLKDAKDAINSNCELRLITVKDPEGLEILRHSCAHLLAHAVKELYPSTEVTIGPVVDNGFYYDFSFKESIGEADLPTIEKKMKELAKKSAPVSYRVVPKAEAIEFFKAQGENYKVEIIDSIADEQVKIYTQDNFSDLCRGPHIPNTSVLKAFKLTKLAGAYWRGNSDNEMLTRIYGTCWATKEDLEQYLNMLEEAEKRDHRKIGKVLDLFHFQEDSPGIAFWHDNGVRIWRQVEDYMRASNNKYGCSEIRTPLIADFSLWQKSGHASKYAENMFATKSENRDFAIRPMNCPTCVQVYNTKLHSYRDLPIRMAEFGIVHRNEPSGSLHGLLRVRSFTQDDGHIFCTPEQVEEEVILMVQQCFEVYKDFGFNDFAVKIALRPENRIGDDETWDKSEQMLKNALDANNVSYELLPGEGAFYGPKIEFHLKDAIGRSWQCGTIQLDFSMPQRLGATYIDKNGEKQVPVMLHRAIVGSLERFIGMLIEHYAGNLPLWLAPVQVAVMGISNNQDDYCKEVFTMLEKNGIRAKLDLRNEKIGFKIREHTLLRVPYLVILGKNEQEQKIITIRKHSGEDLGQMSVDDFCAFLDKQIQAKE.

Residues 1 to 61 (MINIRFPDGS…NSNCELRLIT (61 aa)) form the TGS domain. Positions 241–532 (DHRKIGKVLD…LIEHYAGNLP (292 aa)) are catalytic. Zn(2+)-binding residues include Cys332, His383, and His509.

The protein belongs to the class-II aminoacyl-tRNA synthetase family. In terms of assembly, homodimer. It depends on Zn(2+) as a cofactor.

It is found in the cytoplasm. It carries out the reaction tRNA(Thr) + L-threonine + ATP = L-threonyl-tRNA(Thr) + AMP + diphosphate + H(+). Its function is as follows. Catalyzes the attachment of threonine to tRNA(Thr) in a two-step reaction: L-threonine is first activated by ATP to form Thr-AMP and then transferred to the acceptor end of tRNA(Thr). Also edits incorrectly charged L-seryl-tRNA(Thr). This is Threonine--tRNA ligase from Francisella tularensis subsp. novicida (strain U112).